We begin with the raw amino-acid sequence, 100 residues long: NADH-quinone oxidoreductase subunit K (100 aa).

The next 3 helical transmembrane spans lie at 4–24, 28–48, and 60–80; these read LQHG…GLVI, LLFM…AFVV, and IMYI…LALL.

The protein belongs to the complex I subunit 4L family. In terms of assembly, NDH-1 is composed of 13 different subunits. Subunits NuoA, H, J, K, L, M, N constitute the membrane sector of the complex.

It localises to the cell inner membrane. It carries out the reaction a quinone + NADH + 5 H(+)(in) = a quinol + NAD(+) + 4 H(+)(out). NDH-1 shuttles electrons from NADH, via FMN and iron-sulfur (Fe-S) centers, to quinones in the respiratory chain. The immediate electron acceptor for the enzyme in this species is believed to be ubiquinone. Couples the redox reaction to proton translocation (for every two electrons transferred, four hydrogen ions are translocated across the cytoplasmic membrane), and thus conserves the redox energy in a proton gradient. The protein is NADH-quinone oxidoreductase subunit K of Cronobacter sakazakii (strain ATCC BAA-894) (Enterobacter sakazakii).